The chain runs to 174 residues: Chaperonin-like RBCX protein 1, chloroplastic (174 aa).

Residues 1 to 45 (MESSSSLLHHSYLSYLNPKFGKRPLVSYPLMQSSRKCKQTRICSN) constitute a chloroplast transit peptide.

Belongs to the RbcX family. As to quaternary structure, homodimer. Interacts with rbcL, atpB and THI1.

It localises to the plastid. The protein localises to the chloroplast. Chaperone involved in RuBisCO assembly process. The chain is Chaperonin-like RBCX protein 1, chloroplastic from Arabidopsis thaliana (Mouse-ear cress).